Reading from the N-terminus, the 263-residue chain is Hydroxyethylthiazole kinase (263 aa).

Met45 provides a ligand contact to substrate. ATP is bound by residues Arg121 and Ser167. Gly194 lines the substrate pocket.

The protein belongs to the Thz kinase family. The cofactor is Mg(2+).

It carries out the reaction 5-(2-hydroxyethyl)-4-methylthiazole + ATP = 4-methyl-5-(2-phosphooxyethyl)-thiazole + ADP + H(+). It functions in the pathway cofactor biosynthesis; thiamine diphosphate biosynthesis; 4-methyl-5-(2-phosphoethyl)-thiazole from 5-(2-hydroxyethyl)-4-methylthiazole: step 1/1. Catalyzes the phosphorylation of the hydroxyl group of 4-methyl-5-beta-hydroxyethylthiazole (THZ). This chain is Hydroxyethylthiazole kinase, found in Vibrio parahaemolyticus serotype O3:K6 (strain RIMD 2210633).